Reading from the N-terminus, the 391-residue chain is Pectate lyase B (391 aa).

Residues 1–30 (MKKTVRSLCSTALALTLGFTLLSGPASVQA) form the signal peptide. Ca(2+)-binding residues include aspartate 181, aspartate 203, and aspartate 207. The active site involves arginine 305.

It belongs to the polysaccharide lyase 1 family. It depends on Ca(2+) as a cofactor.

The protein localises to the secreted. It carries out the reaction Eliminative cleavage of (1-&gt;4)-alpha-D-galacturonan to give oligosaccharides with 4-deoxy-alpha-D-galact-4-enuronosyl groups at their non-reducing ends.. The enzyme catalyses Eliminative cleavage of (1-&gt;4)-alpha-D-galacturonan methyl ester to give oligosaccharides with 4-deoxy-6-O-methyl-alpha-D-galact-4-enuronosyl groups at their non-reducing ends.. It participates in glycan metabolism; pectin degradation. Catalyzes the depolymerization of both polygalacturonate and pectins of various methyl esterification degree, with an endo mode of action. Shows the highest activity on 20 to 34% methylated pectin but retains 67%, 51%, 25%, and 1% of its maximum activity on polygalacturonate and 8.5%, 55 to 70%, and 90% methylated pectin, respectively. The sequence is that of Pectate lyase B from Paenibacillus amylolyticus.